Here is a 206-residue protein sequence, read N- to C-terminus: Ras-related protein Rab7 (206 aa).

GTP is bound by residues Gly15 to Thr22, Asp63 to Gln67, and Asn125 to Asp128. S-geranylgeranyl cysteine attachment occurs at residues Cys204 and Cys206. Cys206 carries the cysteine methyl ester modification.

It belongs to the small GTPase superfamily. Rab family.

The protein localises to the cell membrane. Its function is as follows. Protein transport. Probably involved in vesicular traffic. The sequence is that of Ras-related protein Rab7 from Vigna aconitifolia (Moth bean).